The chain runs to 228 residues: Vesicle transport protein SEC20 (228 aa).

Over 1–199 (MAAPQDVHVR…LITKYNRREL (199 aa)) the chain is Cytoplasmic. A coiled-coil region spans residues 37-90 (LSALTELNTKVKEKFQQLRHRIQDLEQLAKEQDKESEKQLLLQEVENHKKQMLS). A helical; Anchor for type IV membrane protein membrane pass occupies residues 200–220 (TDKLLIFLALALFLATVLYIV). Over 221-228 (KKRLFPFL) the chain is Lumenal.

This sequence belongs to the SEC20 family. Component of a SNARE complex consisting of STX18, USE1L, BNIP1/SEC20L and SEC22B. Interacts directly with STX18, RINT1/TIP20L and NAPA. Interacts with ZW10 through RINT1. Interacts with BCL2. Interacts with RNF186. Interacts with RNF185. Interacts with SQSTM1; increased by 'Lys-63'-linked polyubiquitination of BNIP1. In terms of assembly, (Microbial infection) Interacts with adenovirus E1B 19K protein; plays a role in the suppression of cell apoptosis by the viral protein. Polyubiquitinated. 'Lys-63'-linked polyubiquitination by RNF185 increases the interaction with the autophagy receptor SQSTM1. Undergoes 'Lys-29'- and 'Lys-63'-linked polyubiquitination by RNF186 that may regulate BNIP1 localization to the mitochondrion. As to expression, isoform 1 is highly expressed in heart, brain, liver skeletal muscle and pancreas. Isoform 3 is moderately expressed in placenta, lung and kidney. Isoform 4 is highly expressed in testis and small intestine.

Its subcellular location is the endoplasmic reticulum membrane. It is found in the mitochondrion membrane. As part of a SNARE complex may be involved in endoplasmic reticulum membranes fusion and be required for the maintenance of endoplasmic reticulum organization. Also plays a role in apoptosis. It is for instance required for endoplasmic reticulum stress-induced apoptosis. As a substrate of RNF185 interacting with SQSTM1, might also be involved in mitochondrial autophagy. In Homo sapiens (Human), this protein is Vesicle transport protein SEC20 (BNIP1).